Reading from the N-terminus, the 242-residue chain is MNPFAPSAPLGGCLSPVIVALDFPTDADTLEFVARLEPSQCRLKVGKELFTASGRKLVDQLVARGFDVFLDLKYHDIPNTVASACRVAADLGVWMVDMHASGGRRMMEAAREAVANCSVRPLLIGVTVLTSMTDEELAELGLPAAAVQVERLARLAQSSGLDGVVCSAQEAAALKNLLGASFKLVTPGIRLADSAADDQRRVMTPAAAMAAGSDYLVIGRPITKAADPLATLTAINAGLAAR.

Substrate-binding positions include Asp22, Lys44, Asp71 to Thr80, Thr130, Arg190, Gln199, Gly219, and Arg220. The Proton donor role is filled by Lys73.

Belongs to the OMP decarboxylase family. Type 1 subfamily. As to quaternary structure, homodimer.

The enzyme catalyses orotidine 5'-phosphate + H(+) = UMP + CO2. It participates in pyrimidine metabolism; UMP biosynthesis via de novo pathway; UMP from orotate: step 2/2. Catalyzes the decarboxylation of orotidine 5'-monophosphate (OMP) to uridine 5'-monophosphate (UMP). The protein is Orotidine 5'-phosphate decarboxylase of Laribacter hongkongensis (strain HLHK9).